The primary structure comprises 358 residues: Nitric oxide synthase oxygenase (358 aa).

A heme-binding site is contributed by cysteine 62.

It belongs to the NOS family. Bacterial NOS oxygenase subfamily. Homodimer. Heme is required as a cofactor. (6S)-5,6,7,8-tetrahydrofolate serves as cofactor.

It carries out the reaction 3 reduced [flavodoxin] + 2 L-arginine + 4 O2 = 3 oxidized [flavodoxin] + 2 L-citrulline + 2 nitric oxide + 4 H2O + 5 H(+). Catalyzes the production of nitric oxide. This chain is Nitric oxide synthase oxygenase (nos), found in Staphylococcus aureus (strain MRSA252).